Consider the following 169-residue polypeptide: Cell division inhibitor SulA (169 aa).

Residues 1–15 (MFTSAHANRSAQASA) show a composition bias toward polar residues. Positions 1 to 22 (MFTSAHANRSAQASASAGHYAH) are disordered. Positions 106 to 112 (ALRTGNY) are ftsZ binding. The segment at 162–169 (KIHSNLYH) is lon protease binding.

The protein belongs to the SulA family. As to quaternary structure, interacts with FtsZ. Post-translationally, is rapidly cleaved and degraded by the Lon protease once DNA damage is repaired.

Component of the SOS system and an inhibitor of cell division. Accumulation of SulA causes rapid cessation of cell division and the appearance of long, non-septate filaments. In the presence of GTP, binds a polymerization-competent form of FtsZ in a 1:1 ratio, thus inhibiting FtsZ polymerization and therefore preventing it from participating in the assembly of the Z ring. This mechanism prevents the premature segregation of damaged DNA to daughter cells during cell division. The protein is Cell division inhibitor SulA of Klebsiella pneumoniae (strain 342).